A 231-amino-acid polypeptide reads, in one-letter code: dTTP/UTP pyrophosphatase (231 aa).

Residue aspartate 85 is the Proton acceptor of the active site.

Belongs to the Maf family. YhdE subfamily. A divalent metal cation is required as a cofactor.

It localises to the cytoplasm. The enzyme catalyses dTTP + H2O = dTMP + diphosphate + H(+). It catalyses the reaction UTP + H2O = UMP + diphosphate + H(+). In terms of biological role, nucleoside triphosphate pyrophosphatase that hydrolyzes dTTP and UTP. May have a dual role in cell division arrest and in preventing the incorporation of modified nucleotides into cellular nucleic acids. This chain is dTTP/UTP pyrophosphatase, found in Psychrobacter arcticus (strain DSM 17307 / VKM B-2377 / 273-4).